A 332-amino-acid chain; its full sequence is Glucokinase (332 aa).

15–20 contributes to the ATP binding site; that stretch reads ADIGGT.

It belongs to the bacterial glucokinase family.

The protein localises to the cytoplasm. The enzyme catalyses D-glucose + ATP = D-glucose 6-phosphate + ADP + H(+). The chain is Glucokinase from Campylobacter jejuni subsp. doylei (strain ATCC BAA-1458 / RM4099 / 269.97).